The sequence spans 262 residues: Putative hydro-lyase RHA1_ro03475 (262 aa).

This sequence belongs to the D-glutamate cyclase family.

This Rhodococcus jostii (strain RHA1) protein is Putative hydro-lyase RHA1_ro03475.